The sequence spans 291 residues: Transmembrane O-methyltransferase (291 aa).

Residues 31–51 (VGTMSPAIALAFLPLVVTLLV) traverse the membrane as a helical segment. S-adenosyl-L-methionine contacts are provided by residues glutamate 137, 139-140 (GT), serine 145, glutamate 163, and serine 193.

Belongs to the class I-like SAM-binding methyltransferase superfamily. Cation-dependent O-methyltransferase family. Interacts with LHFPL5, PCDH15, TMC1, TMC2 and TMIE. Interacts directly with TMC1. The interaction of TOMT with TMC1 and TMC2 is required for the transportation of TMC1/2 into the stereocilia of hair cells.

It localises to the membrane. Its subcellular location is the cytoplasm. The protein resides in the endoplasmic reticulum. The catalysed reaction is a catechol + S-adenosyl-L-methionine = a guaiacol + S-adenosyl-L-homocysteine + H(+). Functionally, catalyzes the O-methylation, and thereby the inactivation, of catecholamine neurotransmitters and catechol hormones. Required for auditory function. Component of the cochlear hair cell's mechanotransduction (MET) machinery. Involved in the assembly of the asymmetric tip-link MET complex. Required for transportation of TMC1 and TMC2 proteins into the mechanically sensitive stereocilia of the hair cells. The function in MET is independent of the enzymatic activity. The chain is Transmembrane O-methyltransferase from Homo sapiens (Human).